A 520-amino-acid chain; its full sequence is 3-phosphoshikimate 1-carboxyvinyltransferase, chloroplastic (520 aa).

The transit peptide at 1 to 76 (MAQISSMAQG…RISASVATAE (76 aa)) directs the protein to the chloroplast. Positions 99, 100, and 104 each coordinate 3-phosphoshikimate. Residue Lys99 coordinates phosphoenolpyruvate. Positions 177 and 207 each coordinate phosphoenolpyruvate. 3-phosphoshikimate-binding residues include Ser254, Ser255, Gln256, Ser282, Asp407, and Lys434. Residue Gln256 participates in phosphoenolpyruvate binding. Asp407 serves as the catalytic Proton acceptor. 3 residues coordinate phosphoenolpyruvate: Arg438, Arg480, and Lys505.

Belongs to the EPSP synthase family.

It localises to the plastid. The protein localises to the chloroplast. It catalyses the reaction 3-phosphoshikimate + phosphoenolpyruvate = 5-O-(1-carboxyvinyl)-3-phosphoshikimate + phosphate. It functions in the pathway metabolic intermediate biosynthesis; chorismate biosynthesis; chorismate from D-erythrose 4-phosphate and phosphoenolpyruvate: step 6/7. Catalyzes the transfer of the enolpyruvyl moiety of phosphoenolpyruvate (PEP) to the 5-hydroxyl of shikimate-3-phosphate (S3P) to produce enolpyruvyl shikimate-3-phosphate and inorganic phosphate. The chain is 3-phosphoshikimate 1-carboxyvinyltransferase, chloroplastic from Solanum lycopersicum (Tomato).